The chain runs to 396 residues: Sialyltransferase-like protein 2 (396 aa).

Residues 1–6 (MKRRHL) lie on the Cytoplasmic side of the membrane. Residues 7 to 23 (PPVLVLLLLSILSLSFR) form a helical; Signal-anchor for type II membrane protein membrane-spanning segment. Residues 24 to 396 (RRLLVLQGPP…FTVPPVRLHR (373 aa)) lie on the Lumenal side of the membrane. 3 N-linked (GlcNAc...) asparagine glycosylation sites follow: N72, N260, and N304.

This sequence belongs to the glycosyltransferase 29 family.

The protein localises to the golgi apparatus membrane. Does not possess sialyltransferase-like activity in vitro. The chain is Sialyltransferase-like protein 2 from Oryza sativa subsp. indica (Rice).